The chain runs to 260 residues: Lysozyme D (260 aa).

An N-terminal signal peptide occupies residues 1–19 (MRLLVTLILLIFVLTVSGQ). The disordered stretch occupies residues 83 to 148 (GSTTTGGTGS…SGGSSGSGSG (66 aa)). Gly residues-rich tracts occupy residues 101–119 (SGSG…GSGT) and 129–147 (SGSG…GSGS).

Belongs to the dictyostelium lysozyme family. In terms of processing, contains disulfide bonds.

It is found in the cytoplasmic vesicle lumen. The enzyme catalyses Hydrolysis of (1-&gt;4)-beta-linkages between N-acetylmuramic acid and N-acetyl-D-glucosamine residues in a peptidoglycan and between N-acetyl-D-glucosamine residues in chitodextrins.. Has antibacterial activity. The sequence is that of Lysozyme D (alyD-1) from Dictyostelium discoideum (Social amoeba).